The sequence spans 143 residues: Antiholin-like protein LrgA (143 aa).

The next 4 membrane-spanning stretches (helical) occupy residues 6-26 (VYSFLSQAFIFSAIMLISNII), 30-50 (LPIPMPSSVIGLVILFSLLCL), 61-81 (LGTALTGIIGFLFVPSGISVI), and 97-117 (VIVVATVILLAVTGLFAQFIL).

The protein belongs to the CidA/LrgA family. LrgA subfamily.

It is found in the cell membrane. Functionally, inhibits the expression or activity of extracellular murein hydrolases by interacting, possibly with LrgB, with the holin-like protein CidA. The LrgAB and CidA proteins may affect the proton motive force of the membrane. May be involved in programmed cell death (PCD), possibly triggering PCD in response to antibiotics and environmental stresses. This is Antiholin-like protein LrgA from Bacillus cereus (strain AH187).